Reading from the N-terminus, the 543-residue chain is MARYIFITGGVVSSLGKGLMAASLAALLQARGFRVRIRKFDPYLNVDPGTMSPYQHGEVYVTDDGAETDLDLGHYERFTGVSARQADNITSGRIYRDIITKERRGDYLGATVQVIPHVTDAIKDFAQAETEDLDFVLCEIGGTVGDIEGLPFIEALRQLHNELDRDQTCFVHVTLVPYIAAAGELKTKPTQHSVRELTGLGIQPDILLCRCEKPLPEGERAKIAQFCNVRKSAVIPALDASSIYAVPLQYHAEGLDGEVLRHFGLTAPDPDLARWEDIVDRYQNPEGEVTIGVVGKYVGLQDAYKSLNEALAHGGMANRVKVRVKWLDAELFEKGDDEIAAQLEPMHGILVPGGFGERGTEGKIASVRFARERKVPFFGICLGMQMACVEGARNTAGIAGASSTEFGPTDEPVVGIITEWMTAEGLEKRSEGGDLGGTMRLGAYEAHLAGNSHVANIYGSTVISERHRHRYEVNVAYKERLEKGGLVFSGMSPDGLLPEIVERPDHPWFIGVQFHPELKSRPFEPHPLFKGFIAAAVKQARLV.

The tract at residues 1–265 is amidoligase domain; sequence MARYIFITGG…DGEVLRHFGL (265 aa). Ser13 is a CTP binding site. Residue Ser13 participates in UTP binding. ATP is bound at residue 14–19; that stretch reads SLGKGL. Tyr54 provides a ligand contact to L-glutamine. Residue Asp71 participates in ATP binding. Mg(2+)-binding residues include Asp71 and Glu139. Residues 146-148, 186-191, and Lys222 contribute to the CTP site; these read DIE and KTKPTQ. Residues 186–191 and Lys222 each bind UTP; that span reads KTKPTQ. One can recognise a Glutamine amidotransferase type-1 domain in the interval 290-542; it reads TIGVVGKYVG…IAAAVKQARL (253 aa). Gly354 serves as a coordination point for L-glutamine. Cys381 acts as the Nucleophile; for glutamine hydrolysis in catalysis. Residues 382–385, Glu405, and Arg470 contribute to the L-glutamine site; that span reads LGMQ. Catalysis depends on residues His515 and Glu517.

Belongs to the CTP synthase family. In terms of assembly, homotetramer.

It catalyses the reaction UTP + L-glutamine + ATP + H2O = CTP + L-glutamate + ADP + phosphate + 2 H(+). The catalysed reaction is L-glutamine + H2O = L-glutamate + NH4(+). The enzyme catalyses UTP + NH4(+) + ATP = CTP + ADP + phosphate + 2 H(+). It functions in the pathway pyrimidine metabolism; CTP biosynthesis via de novo pathway; CTP from UDP: step 2/2. Allosterically activated by GTP, when glutamine is the substrate; GTP has no effect on the reaction when ammonia is the substrate. The allosteric effector GTP functions by stabilizing the protein conformation that binds the tetrahedral intermediate(s) formed during glutamine hydrolysis. Inhibited by the product CTP, via allosteric rather than competitive inhibition. Functionally, catalyzes the ATP-dependent amination of UTP to CTP with either L-glutamine or ammonia as the source of nitrogen. Regulates intracellular CTP levels through interactions with the four ribonucleotide triphosphates. In Novosphingobium aromaticivorans (strain ATCC 700278 / DSM 12444 / CCUG 56034 / CIP 105152 / NBRC 16084 / F199), this protein is CTP synthase.